Reading from the N-terminus, the 371-residue chain is Chaperone protein DnaJ (371 aa).

One can recognise a J domain in the interval 5-69 (DYYEVLGLSK…QKRAQYDQFG (65 aa)). The CR-type zinc-finger motif lies at 133-215 (GKELNVEIPV…CHGSGKVRKR (83 aa)). 8 residues coordinate Zn(2+): C146, C149, C163, C166, C189, C192, C203, and C206. CXXCXGXG motif repeat units lie at residues 146–153 (CDTCKGSG), 163–170 (CKHCSGSG), 189–196 (CSHCSGTG), and 203–210 (CTTCHGSG).

The protein belongs to the DnaJ family. In terms of assembly, homodimer. Zn(2+) is required as a cofactor.

It is found in the cytoplasm. Participates actively in the response to hyperosmotic and heat shock by preventing the aggregation of stress-denatured proteins and by disaggregating proteins, also in an autonomous, DnaK-independent fashion. Unfolded proteins bind initially to DnaJ; upon interaction with the DnaJ-bound protein, DnaK hydrolyzes its bound ATP, resulting in the formation of a stable complex. GrpE releases ADP from DnaK; ATP binding to DnaK triggers the release of the substrate protein, thus completing the reaction cycle. Several rounds of ATP-dependent interactions between DnaJ, DnaK and GrpE are required for fully efficient folding. Also involved, together with DnaK and GrpE, in the DNA replication of plasmids through activation of initiation proteins. This chain is Chaperone protein DnaJ, found in Bacillus cereus (strain 03BB102).